Here is a 503-residue protein sequence, read N- to C-terminus: ATP synthase subunit beta (503 aa).

Residue 157–164 (GGAGVGKT) coordinates ATP.

This sequence belongs to the ATPase alpha/beta chains family. F-type ATPases have 2 components, CF(1) - the catalytic core - and CF(0) - the membrane proton channel. CF(1) has five subunits: alpha(3), beta(3), gamma(1), delta(1), epsilon(1). CF(0) has three main subunits: a(1), b(2) and c(9-12). The alpha and beta chains form an alternating ring which encloses part of the gamma chain. CF(1) is attached to CF(0) by a central stalk formed by the gamma and epsilon chains, while a peripheral stalk is formed by the delta and b chains.

It localises to the cell inner membrane. The catalysed reaction is ATP + H2O + 4 H(+)(in) = ADP + phosphate + 5 H(+)(out). Its function is as follows. Produces ATP from ADP in the presence of a proton gradient across the membrane. The catalytic sites are hosted primarily by the beta subunits. This is ATP synthase subunit beta from Flavobacterium johnsoniae (strain ATCC 17061 / DSM 2064 / JCM 8514 / BCRC 14874 / CCUG 350202 / NBRC 14942 / NCIMB 11054 / UW101) (Cytophaga johnsonae).